A 143-amino-acid polypeptide reads, in one-letter code: UPF0201 protein Msed_1787 (143 aa).

The protein belongs to the UPF0201 family.

This is UPF0201 protein Msed_1787 from Metallosphaera sedula (strain ATCC 51363 / DSM 5348 / JCM 9185 / NBRC 15509 / TH2).